Reading from the N-terminus, the 124-residue chain is Small ribosomal subunit protein uS12 (124 aa).

The disordered stretch occupies residues 1–24; sequence MPTINQLIKKPRKSQKEKTASPAL. Asp-89 carries the 3-methylthioaspartic acid modification.

Belongs to the universal ribosomal protein uS12 family. In terms of assembly, part of the 30S ribosomal subunit. Contacts proteins S8 and S17. May interact with IF1 in the 30S initiation complex.

Its function is as follows. With S4 and S5 plays an important role in translational accuracy. Functionally, interacts with and stabilizes bases of the 16S rRNA that are involved in tRNA selection in the A site and with the mRNA backbone. Located at the interface of the 30S and 50S subunits, it traverses the body of the 30S subunit contacting proteins on the other side and probably holding the rRNA structure together. The combined cluster of proteins S8, S12 and S17 appears to hold together the shoulder and platform of the 30S subunit. The chain is Small ribosomal subunit protein uS12 from Borrelia hermsii (strain HS1 / DAH).